Here is a 465-residue protein sequence, read N- to C-terminus: VGFKAGVKDYKLTYYTPEYVTKDTDILAAFRVTPQPGVPPEEAGAAVAAESSTGTWTTVWTDGLTSLDRYKGRCYNIEPVAGEENQYICYVAYPLDLFEEGSVTNMFTSIVGNVFGFKALRALRLEDLRIPPEYSKTFQGPLHGIQVERDKLNKYGRPLLGCTIKPKLGLSAKNYGRAVYECLRGGLDFTKDDENVNSQPFMRWRDRFLFCAEAIYKSQAETGEIKGHYLNATAGTCEEMIKRAVFARELGVPIVMHDYLTGGFTANTSLAHYCRDNGLLLHIHRAMHAVIDRQKNHGMHFRVLAKALRLSGGDHIHAGTVVGKLEGERDITLGFVDLLRDDFIEKDRSRGIYFTQDWVSLPGVLPVASGGIHVWHMPALTEIFGDDSVLQFGGGTLGHPWGNAPGAVANRVALEACVQARNEGRDLAREGNEIIREASKWSPELAAACEVWKEIKFEFPAMDTL.

K4 is modified (N6,N6,N6-trimethyllysine). N113 and T163 together coordinate substrate. The active-site Proton acceptor is K165. K167 lines the substrate pocket. Mg(2+) contacts are provided by K191, D193, and E194. K191 bears the N6-carboxylysine mark. The Proton acceptor role is filled by H284. Residues R285, H317, and S369 each contribute to the substrate site.

It belongs to the RuBisCO large chain family. Type I subfamily. In terms of assembly, heterohexadecamer of 8 large chains and 8 small chains; disulfide-linked. The disulfide link is formed within the large subunit homodimers. Requires Mg(2+) as cofactor. In terms of processing, the disulfide bond which can form in the large chain dimeric partners within the hexadecamer appears to be associated with oxidative stress and protein turnover.

Its subcellular location is the plastid. The protein localises to the chloroplast. It carries out the reaction 2 (2R)-3-phosphoglycerate + 2 H(+) = D-ribulose 1,5-bisphosphate + CO2 + H2O. The catalysed reaction is D-ribulose 1,5-bisphosphate + O2 = 2-phosphoglycolate + (2R)-3-phosphoglycerate + 2 H(+). In terms of biological role, ruBisCO catalyzes two reactions: the carboxylation of D-ribulose 1,5-bisphosphate, the primary event in carbon dioxide fixation, as well as the oxidative fragmentation of the pentose substrate in the photorespiration process. Both reactions occur simultaneously and in competition at the same active site. The chain is Ribulose bisphosphate carboxylase large chain from Ailanthus altissima (Tree-of-heaven).